The following is a 623-amino-acid chain: Chaperone protein HtpG (623 aa).

Positions 1–336 (MVSKQQTMGF…ASDLPLNISR (336 aa)) are a; substrate-binding. Residues 337–550 (EILQDNKQVE…EQDMGLEMQR (214 aa)) are b. Residues 551 to 623 (ILQAAGQQIP…NRVNRLLVSS (73 aa)) form a c region.

It belongs to the heat shock protein 90 family. As to quaternary structure, homodimer.

It localises to the cytoplasm. Its function is as follows. Molecular chaperone. Has ATPase activity. The sequence is that of Chaperone protein HtpG from Legionella pneumophila (strain Lens).